Here is a 161-residue protein sequence, read N- to C-terminus: ATP synthase subunit b (161 aa).

Residues 2-22 (VIEWGTALYQLLAFAVLLLIL) traverse the membrane as a helical segment.

It belongs to the ATPase B chain family. As to quaternary structure, F-type ATPases have 2 components, F(1) - the catalytic core - and F(0) - the membrane proton channel. F(1) has five subunits: alpha(3), beta(3), gamma(1), delta(1), epsilon(1). F(0) has three main subunits: a(1), b(2) and c(10-14). The alpha and beta chains form an alternating ring which encloses part of the gamma chain. F(1) is attached to F(0) by a central stalk formed by the gamma and epsilon chains, while a peripheral stalk is formed by the delta and b chains.

Its subcellular location is the cell membrane. Its function is as follows. F(1)F(0) ATP synthase produces ATP from ADP in the presence of a proton or sodium gradient. F-type ATPases consist of two structural domains, F(1) containing the extramembraneous catalytic core and F(0) containing the membrane proton channel, linked together by a central stalk and a peripheral stalk. During catalysis, ATP synthesis in the catalytic domain of F(1) is coupled via a rotary mechanism of the central stalk subunits to proton translocation. Functionally, component of the F(0) channel, it forms part of the peripheral stalk, linking F(1) to F(0). The polypeptide is ATP synthase subunit b (Shouchella clausii (strain KSM-K16) (Alkalihalobacillus clausii)).